Here is a 102-residue protein sequence, read N- to C-terminus: Putative ribosomal protein uL13-like (102 aa).

It belongs to the universal ribosomal protein uL13 family.

In Homo sapiens (Human), this protein is Putative ribosomal protein uL13-like (RPL13AP3).